Here is a 248-residue protein sequence, read N- to C-terminus: Ribosomal RNA small subunit methyltransferase G (248 aa).

S-adenosyl-L-methionine is bound by residues G85, F90, D108 to S110, A137 to E138, and R156.

Belongs to the methyltransferase superfamily. RNA methyltransferase RsmG family.

Its subcellular location is the cytoplasm. In terms of biological role, specifically methylates the N7 position of a guanine in 16S rRNA. This chain is Ribosomal RNA small subunit methyltransferase G, found in Prochlorococcus marinus (strain NATL1A).